The following is a 335-amino-acid chain: Serine protease 42 (335 aa).

The first 24 residues, Met-1 to Ala-24, serve as a signal peptide directing secretion. Asn-67 carries an N-linked (GlcNAc...) asparagine glycan. In terms of domain architecture, Peptidase S1 spans Ile-79–Asn-315. Cys-104 and Cys-120 are oxidised to a cystine. His-119 serves as the catalytic Charge relay system. Asn-140 carries an N-linked (GlcNAc...) asparagine glycan. The active-site Charge relay system is the Asp-165. N-linked (GlcNAc...) asparagine glycosylation is present at Asn-176. Cystine bridges form between Cys-199–Cys-273, Cys-232–Cys-253, and Cys-263–Cys-291. The Charge relay system role is filled by Ser-267.

It belongs to the peptidase S1 family. In terms of tissue distribution, testis-specific. Mainly detected in round spermatids at all the eminiferous epithelial stages (at protein level).

The protein resides in the cytoplasm. The protein localises to the cell membrane. Its function is as follows. Plays a role in spermatogenesis. Involved in germ cell survival during meiosis. Lacks protease activity in vitro. The protein is Serine protease 42 of Mus musculus (Mouse).